Consider the following 550-residue polypeptide: MLKNINPTKTVAWSELKTLFDANADLKISTLFANDPQRFKAFSRQFDDHLLVDFSKNLITEEIFTKLLALAEEVDLKGAIKAQFSGEKINVTENRAVLHSALRNRSNTPVFVDGENVMPKVNAVLEKMKAFCTKVHSGEWKGYTGKAITDIVNIGIGGSDLGPFMVTEALRPYKVEGIDAHFVSNVDGTHIVETLAKVDPETTLFLVASKTFTTQETMTNAHSAREWFLNFAEDETFVAKHFAALSTNADAVAEFGIDVDNMFEFWDWVGGRYSIWSAIGLSIALTIGFDNYEVLLGGAHEMDKHFEETDFENNIPVILAVIGVWYNNFHGAESEAILPYDQYMHRFPAYFQQGNMESNGKCVDRNGESVDYQTGPIIWGEPGTNGQHAFYQLIHQGTKLIPCDFIAPAVSHNPVGDHHAKLLSNFFAQTEALAFGKSKETVEAEFAAAGKTTEEVAHLIPSKVFAGNNPTNSILVNKITPQTLGQLIAMYEQKIFVQGVIWNIFSFDQWGVELGKQLAGQILPELTTVNAVDSHDSSTNGLINAWKAWK.

The Proton donor role is filled by Glu357. Active-site residues include His388 and Lys516.

The protein belongs to the GPI family.

The protein resides in the cytoplasm. It carries out the reaction alpha-D-glucose 6-phosphate = beta-D-fructose 6-phosphate. Its pathway is carbohydrate biosynthesis; gluconeogenesis. The protein operates within carbohydrate degradation; glycolysis; D-glyceraldehyde 3-phosphate and glycerone phosphate from D-glucose: step 2/4. Catalyzes the reversible isomerization of glucose-6-phosphate to fructose-6-phosphate. In Psychromonas ingrahamii (strain DSM 17664 / CCUG 51855 / 37), this protein is Glucose-6-phosphate isomerase.